We begin with the raw amino-acid sequence, 430 residues long: Argininosuccinate lyase (430 aa).

The protein belongs to the lyase 1 family. Argininosuccinate lyase subfamily.

It localises to the cytoplasm. It carries out the reaction 2-(N(omega)-L-arginino)succinate = fumarate + L-arginine. The protein operates within amino-acid biosynthesis; L-arginine biosynthesis; L-arginine from L-ornithine and carbamoyl phosphate: step 3/3. This chain is Argininosuccinate lyase, found in Sorangium cellulosum (strain So ce56) (Polyangium cellulosum (strain So ce56)).